The following is a 475-amino-acid chain: Threonine synthase (475 aa).

An N6-(pyridoxal phosphate)lysine modification is found at Lys-120.

This sequence belongs to the threonine synthase family. Pyridoxal 5'-phosphate is required as a cofactor.

It catalyses the reaction O-phospho-L-homoserine + H2O = L-threonine + phosphate. Its pathway is amino-acid biosynthesis; L-threonine biosynthesis; L-threonine from L-aspartate: step 5/5. Catalyzes the gamma-elimination of phosphate from L-phosphohomoserine and the beta-addition of water to produce L-threonine. The sequence is that of Threonine synthase (thrC) from Methylobacillus glycogenes.